A 337-amino-acid polypeptide reads, in one-letter code: METNLQQVKNSSQTFSEKQNPKQEASPSPISSTCSSPSHDFSFTISLQPLSSSSKHISPTLRSPSKTTSSYQQTDPFAVDLSPADEIFFHGHLLPLHLLSHLPVSPRTSTGSYNDGFTLPVKDILPDQPTNNNNNTENAITNISTEAKDDNTEDKAEGEIRVKTKPIKSFSLFGLSKWRKGFESNEREQEQQQQKIKKPMSLDLSHAVKKYIRMLFQKRGNGTQFWNRRQTSSYSFSSSLMGPNGNSKTMINGSYNKRDLIRGRRGELFSAPASMRTSPTNSGHLRVSTAGLSSSSGSTSSSSSDSTMEELQAAIQAAIAHCKNSSAVDRDDKVKDS.

Over residues 1–25 (METNLQQVKNSSQTFSEKQNPKQEA) the composition is skewed to polar residues. Disordered stretches follow at residues 1–38 (METN…SSPS) and 51–72 (SSSS…SSYQ). Residues 26 to 38 (SPSPISSTCSSPS) show a composition bias toward low complexity. Tyr211 carries the phosphotyrosine modification. Residues 270–310 (SAPASMRTSPTNSGHLRVSTAGLSSSSGSTSSSSSDSTMEE) form a disordered region. A compositionally biased stretch (low complexity) spans 288–310 (STAGLSSSSGSTSSSSSDSTMEE).

In terms of assembly, interacts (via C-terminus) with BRI1 (via kinase domain). In terms of processing, phosphorylated on Tyr-211 in response to brassinosteroid perception, leading to its inactivation: once phosphorylated, displaced into the cytosol where it is inactive. As to expression, expressed in leaves, petioles, shoot apices, hypocotyls, roots and flowers.

It localises to the cell membrane. The protein localises to the cytoplasm. In terms of biological role, negative regulator of brassinosteroid signaling. When associated to the membrane, limits the interaction of BRI1 with BAK1 by binding to the kinase-inactive form of BRI1. This is BRI1 kinase inhibitor 1 (BKI1) from Arabidopsis thaliana (Mouse-ear cress).